The sequence spans 490 residues: Cytochrome P450 2C20 (490 aa).

Cysteine 435 lines the heme pocket.

Belongs to the cytochrome P450 family. Requires heme as cofactor.

The protein resides in the endoplasmic reticulum membrane. The protein localises to the microsome membrane. It carries out the reaction an organic molecule + reduced [NADPH--hemoprotein reductase] + O2 = an alcohol + oxidized [NADPH--hemoprotein reductase] + H2O + H(+). Functionally, cytochromes P450 are a group of heme-thiolate monooxygenases. In liver microsomes, this enzyme is involved in an NADPH-dependent electron transport pathway. It oxidizes a variety of structurally unrelated compounds, including steroids, fatty acids, and xenobiotics. This Macaca fascicularis (Crab-eating macaque) protein is Cytochrome P450 2C20 (CYP2C20).